Consider the following 321-residue polypeptide: uncharacterized protein (321 aa).

Residues 1–56 (MANIKDIAEKAGVSVTTVSRVINNHPYVSEDKRKRVFEAMESLEYTRNIHAVHLSK) form the HTH lacI-type domain. The segment at residues 4–23 (IKDIAEKAGVSVTTVSRVIN) is a DNA-binding region (H-T-H motif).

This is an uncharacterized protein from Bacillus subtilis (strain 168).